The sequence spans 377 residues: 23S rRNA (uracil(747)-C(5))-methyltransferase RlmC (377 aa).

[4Fe-4S] cluster contacts are provided by Cys-3, Cys-11, Cys-14, and Cys-87. Gln-212, Phe-241, Glu-262, and Asn-307 together coordinate S-adenosyl-L-methionine. The active-site Nucleophile is the Cys-334.

Belongs to the class I-like SAM-binding methyltransferase superfamily. RNA M5U methyltransferase family. RlmC subfamily.

It catalyses the reaction uridine(747) in 23S rRNA + S-adenosyl-L-methionine = 5-methyluridine(747) in 23S rRNA + S-adenosyl-L-homocysteine + H(+). Its function is as follows. Catalyzes the formation of 5-methyl-uridine at position 747 (m5U747) in 23S rRNA. The polypeptide is 23S rRNA (uracil(747)-C(5))-methyltransferase RlmC (Xenorhabdus bovienii (strain SS-2004) (Xenorhabdus nematophila subsp. bovienii)).